We begin with the raw amino-acid sequence, 165 residues long: Phosphopantetheine adenylyltransferase (165 aa).

Belongs to the eukaryotic CoaD family.

It is found in the cytoplasm. The enzyme catalyses (R)-4'-phosphopantetheine + ATP + H(+) = 3'-dephospho-CoA + diphosphate. It functions in the pathway cofactor biosynthesis; coenzyme A biosynthesis. Its function is as follows. Reversibly transfers an adenylyl group from ATP to 4'-phosphopantetheine, yielding dephospho-CoA (dPCoA) and pyrophosphate. The polypeptide is Phosphopantetheine adenylyltransferase (Thermococcus kodakarensis (strain ATCC BAA-918 / JCM 12380 / KOD1) (Pyrococcus kodakaraensis (strain KOD1))).